The sequence spans 576 residues: Arginine--tRNA ligase (576 aa).

Positions 122 to 132 (PNVAKEMHVGH) match the 'HIGH' region motif.

It belongs to the class-I aminoacyl-tRNA synthetase family. As to quaternary structure, monomer.

It is found in the cytoplasm. The catalysed reaction is tRNA(Arg) + L-arginine + ATP = L-arginyl-tRNA(Arg) + AMP + diphosphate. In Mannheimia succiniciproducens (strain KCTC 0769BP / MBEL55E), this protein is Arginine--tRNA ligase.